The following is a 70-amino-acid chain: Venom antimicrobial peptide-6 (70 aa).

The N-terminal stretch at Met-1 to Ala-23 is a signal peptide. Phe-36 carries the post-translational modification Phenylalanine amide. A propeptide spanning residues Ser-40–Tyr-70 is cleaved from the precursor.

Belongs to the non-disulfide-bridged peptide (NDBP) superfamily. Short antimicrobial peptide (group 4) family. Expressed by the venom gland.

It localises to the secreted. The protein resides in the target cell membrane. Amphipathic peptide that exhibits extensive cytolytic activities against both prokaryotic and eukaryotic cells. Is more potent against Gram-positive bacteria (lethal concentration (LC)=0.25-2.9 uM) than against Gram-negative bacteria (LC=6.2-&gt;50 uM), and fungi ((LC)=14.1-&gt;50 uM). Shows hemolytic activity against rabbit erythrocytes (37.7% of inhibition at 6.25 uM) and cytolysis against rat dorsal root ganglions. In vivo, intravenous injection into mice tail provokes uncomfortable symptoms with a death rate of 12.5%. This is Venom antimicrobial peptide-6 from Mesobuthus eupeus (Lesser Asian scorpion).